The chain runs to 131 residues: Small ribosomal subunit protein uS8 (131 aa).

This sequence belongs to the universal ribosomal protein uS8 family. Part of the 30S ribosomal subunit. Contacts proteins S5 and S12.

Its function is as follows. One of the primary rRNA binding proteins, it binds directly to 16S rRNA central domain where it helps coordinate assembly of the platform of the 30S subunit. The protein is Small ribosomal subunit protein uS8 of Solibacter usitatus (strain Ellin6076).